Here is a 440-residue protein sequence, read N- to C-terminus: Ribosomal protein uS12 methylthiotransferase RimO (440 aa).

The 111-residue stretch at 6–116 (PKVGFVSLGC…VVTAVHEVVP (111 aa)) folds into the MTTase N-terminal domain. Residues Cys15, Cys51, Cys80, Cys149, Cys153, and Cys156 each contribute to the [4Fe-4S] cluster site. In terms of domain architecture, Radical SAM core spans 135–373 (LTPRHYAYLK…MAHQQAISAA (239 aa)). Residues 376–440 (QLKVGKEIEV…DEYDLWAELV (65 aa)) form the TRAM domain.

This sequence belongs to the methylthiotransferase family. RimO subfamily. [4Fe-4S] cluster is required as a cofactor.

Its subcellular location is the cytoplasm. The catalysed reaction is L-aspartate(89)-[ribosomal protein uS12]-hydrogen + (sulfur carrier)-SH + AH2 + 2 S-adenosyl-L-methionine = 3-methylsulfanyl-L-aspartate(89)-[ribosomal protein uS12]-hydrogen + (sulfur carrier)-H + 5'-deoxyadenosine + L-methionine + A + S-adenosyl-L-homocysteine + 2 H(+). Functionally, catalyzes the methylthiolation of an aspartic acid residue of ribosomal protein uS12. In Pseudomonas aeruginosa (strain UCBPP-PA14), this protein is Ribosomal protein uS12 methylthiotransferase RimO.